We begin with the raw amino-acid sequence, 366 residues long: tRNA/tmRNA (uracil-C(5))-methyltransferase (366 aa).

Residues Gln-189, Tyr-217, Asn-222, Glu-238, and Asp-298 each coordinate S-adenosyl-L-methionine. Residue Cys-323 is the Nucleophile of the active site. The Proton acceptor role is filled by Glu-357.

Belongs to the class I-like SAM-binding methyltransferase superfamily. RNA M5U methyltransferase family. TrmA subfamily.

The catalysed reaction is uridine(54) in tRNA + S-adenosyl-L-methionine = 5-methyluridine(54) in tRNA + S-adenosyl-L-homocysteine + H(+). It catalyses the reaction uridine(341) in tmRNA + S-adenosyl-L-methionine = 5-methyluridine(341) in tmRNA + S-adenosyl-L-homocysteine + H(+). Its function is as follows. Dual-specificity methyltransferase that catalyzes the formation of 5-methyluridine at position 54 (m5U54) in all tRNAs, and that of position 341 (m5U341) in tmRNA (transfer-mRNA). The chain is tRNA/tmRNA (uracil-C(5))-methyltransferase from Shewanella putrefaciens (strain CN-32 / ATCC BAA-453).